The sequence spans 179 residues: Large ribosomal subunit protein bL9 (179 aa).

Residues 155–179 (KPEEAPVPVAEEPTAETEQAEVAAE) form a disordered region. The segment covering 167 to 179 (PTAETEQAEVAAE) has biased composition (acidic residues).

Belongs to the bacterial ribosomal protein bL9 family.

Its function is as follows. Binds to the 23S rRNA. The polypeptide is Large ribosomal subunit protein bL9 (Porphyromonas gingivalis (strain ATCC BAA-308 / W83)).